A 500-amino-acid chain; its full sequence is Glycerol kinase (500 aa).

Thr13 contributes to the ADP binding site. ATP is bound by residues Thr13, Thr14, and Ser15. Thr13 is a binding site for sn-glycerol 3-phosphate. Arg17 is a binding site for ADP. Positions 83, 84, 135, and 244 each coordinate sn-glycerol 3-phosphate. Glycerol is bound by residues Arg83, Glu84, Tyr135, Asp244, and Gln245. ADP contacts are provided by Thr266 and Gly309. Residues Thr266, Gly309, Gln313, and Gly410 each coordinate ATP. Residues Gly410 and Asn414 each coordinate ADP.

This sequence belongs to the FGGY kinase family.

It carries out the reaction glycerol + ATP = sn-glycerol 3-phosphate + ADP + H(+). The protein operates within polyol metabolism; glycerol degradation via glycerol kinase pathway; sn-glycerol 3-phosphate from glycerol: step 1/1. Inhibited by fructose 1,6-bisphosphate (FBP). Key enzyme in the regulation of glycerol uptake and metabolism. Catalyzes the phosphorylation of glycerol to yield sn-glycerol 3-phosphate. This chain is Glycerol kinase, found in Burkholderia ambifaria (strain ATCC BAA-244 / DSM 16087 / CCUG 44356 / LMG 19182 / AMMD) (Burkholderia cepacia (strain AMMD)).